Consider the following 211-residue polypeptide: Large ribosomal subunit protein uL3 (211 aa).

N5-methylglutamine is present on Gln150.

The protein belongs to the universal ribosomal protein uL3 family. Part of the 50S ribosomal subunit. Forms a cluster with proteins L14 and L19. Post-translationally, methylated by PrmB.

Functionally, one of the primary rRNA binding proteins, it binds directly near the 3'-end of the 23S rRNA, where it nucleates assembly of the 50S subunit. This Pseudomonas syringae pv. syringae (strain B728a) protein is Large ribosomal subunit protein uL3.